The following is a 542-amino-acid chain: Chaperonin GroEL (542 aa).

ATP-binding positions include 29-32 (TLGP), 86-90 (DGTTT), glycine 413, 476-478 (NAA), and aspartate 492.

The protein belongs to the chaperonin (HSP60) family. Forms a cylinder of 14 subunits composed of two heptameric rings stacked back-to-back. Interacts with the co-chaperonin GroES.

It is found in the cytoplasm. It carries out the reaction ATP + H2O + a folded polypeptide = ADP + phosphate + an unfolded polypeptide.. Functionally, together with its co-chaperonin GroES, plays an essential role in assisting protein folding. The GroEL-GroES system forms a nano-cage that allows encapsulation of the non-native substrate proteins and provides a physical environment optimized to promote and accelerate protein folding. The protein is Chaperonin GroEL of Bacillus cytotoxicus (strain DSM 22905 / CIP 110041 / 391-98 / NVH 391-98).